Consider the following 332-residue polypeptide: Phosphoribosylformylglycinamidine cyclo-ligase (332 aa).

The protein belongs to the AIR synthase family.

The protein resides in the cytoplasm. The catalysed reaction is 2-formamido-N(1)-(5-O-phospho-beta-D-ribosyl)acetamidine + ATP = 5-amino-1-(5-phospho-beta-D-ribosyl)imidazole + ADP + phosphate + H(+). Its pathway is purine metabolism; IMP biosynthesis via de novo pathway; 5-amino-1-(5-phospho-D-ribosyl)imidazole from N(2)-formyl-N(1)-(5-phospho-D-ribosyl)glycinamide: step 2/2. The sequence is that of Phosphoribosylformylglycinamidine cyclo-ligase from Clostridium acetobutylicum (strain ATCC 824 / DSM 792 / JCM 1419 / IAM 19013 / LMG 5710 / NBRC 13948 / NRRL B-527 / VKM B-1787 / 2291 / W).